Here is a 293-residue protein sequence, read N- to C-terminus: Small ribosomal subunit biogenesis GTPase RsgA (293 aa).

The region spanning 63-223 (KNQLNRPPIA…VADTPGFSSL (161 aa)) is the CP-type G domain. Residues 112–115 (SKTD) and 166–174 (GQSGVGKSS) contribute to the GTP site. Residues cysteine 247, cysteine 252, histidine 254, and cysteine 260 each coordinate Zn(2+).

The protein belongs to the TRAFAC class YlqF/YawG GTPase family. RsgA subfamily. Monomer. Associates with 30S ribosomal subunit, binds 16S rRNA. Zn(2+) serves as cofactor.

The protein resides in the cytoplasm. One of several proteins that assist in the late maturation steps of the functional core of the 30S ribosomal subunit. Helps release RbfA from mature subunits. May play a role in the assembly of ribosomal proteins into the subunit. Circularly permuted GTPase that catalyzes slow GTP hydrolysis, GTPase activity is stimulated by the 30S ribosomal subunit. This is Small ribosomal subunit biogenesis GTPase RsgA from Shouchella clausii (strain KSM-K16) (Alkalihalobacillus clausii).